The following is a 399-amino-acid chain: MKFILSVLALASFQHVFCDDVERAYAWRNISFVDTREGTYNPEDVIPTGVTHDAKTKKLYFGVPRLYPNIPYTLAEIDTNKYNSSEIRSPPFSKFNSQGGKEFTSIYQPVIDDCRRLWVLDVGEADYKKNGNEYPTKNPEIIAFDLNQEGNPEVHRYKLEGDVAKTPLGFGGFAVDVLNPNGNCATSDETYLYITNFIDNALIVYDMKNRNAWKINDDSFKPEPGKSVFNHKGEEYTYSVGIFGITLGDRDKDGHRLAYYLAGSSTKVYNVNTANLKKKVKSLKPTLLGERGYKTEAIALAYDPKTKVIFFAESDSRQVSCWNIQKDLKPENVGVIYTNAYFVFGTDIMVDADSTLWFMSNAHPPTKIPKLEFDKRQIRLMKVPTHRAIRNLPCEMRKA.

An N-terminal signal peptide occupies residues 1-18 (MKFILSVLALASFQHVFC). N29 and N83 each carry an N-linked (GlcNAc...) asparagine glycan.

This sequence belongs to the major royal jelly protein family. As to expression, salivary gland (at protein level).

It localises to the secreted. Its function is as follows. Probably modulates blood feeding of sand flies on vertebrate species by binding and sequestering different mediators involved in the host response. Functions as a chemoattractant for host neutrophils; likely acts through a G-protein-coupled receptor and effect is dependent on calcium influx and phosphatidylinositol 3-kinases (PI3K) activity. In terms of biological role, (Microbial infection) Probably enhances infection caused by Leishmania species in the host through augmentation of host neutrophil recruitment into the skin. In Phlebotomus duboscqi (Sandfly), this protein is Yellow-related salivary protein M10.